We begin with the raw amino-acid sequence, 187 residues long: Adenine phosphoribosyltransferase (187 aa).

133-137 (ATGGS) serves as a coordination point for AMP.

The protein belongs to the purine/pyrimidine phosphoribosyltransferase family. As to quaternary structure, homodimer. Mg(2+) serves as cofactor.

The protein resides in the cytoplasm. It localises to the nucleus. The catalysed reaction is AMP + diphosphate = 5-phospho-alpha-D-ribose 1-diphosphate + adenine. Its pathway is purine metabolism; AMP biosynthesis via salvage pathway; AMP from adenine: step 1/1. In terms of biological role, catalyzes a salvage reaction resulting in the formation of AMP, that is energically less costly than de novo synthesis. This is Adenine phosphoribosyltransferase (APT1) from Eremothecium gossypii (strain ATCC 10895 / CBS 109.51 / FGSC 9923 / NRRL Y-1056) (Yeast).